The chain runs to 249 residues: Triosephosphate isomerase (249 aa).

8-10 (NWK) serves as a coordination point for substrate. The active-site Electrophile is His95. Glu163 functions as the Proton acceptor in the catalytic mechanism. Gly169 and Ser209 together coordinate substrate.

Belongs to the triosephosphate isomerase family. As to quaternary structure, homodimer.

The protein resides in the cytoplasm. The catalysed reaction is D-glyceraldehyde 3-phosphate = dihydroxyacetone phosphate. It participates in carbohydrate biosynthesis; gluconeogenesis. The protein operates within carbohydrate degradation; glycolysis; D-glyceraldehyde 3-phosphate from glycerone phosphate: step 1/1. In terms of biological role, involved in the gluconeogenesis. Catalyzes stereospecifically the conversion of dihydroxyacetone phosphate (DHAP) to D-glyceraldehyde-3-phosphate (G3P). This Orientia tsutsugamushi (strain Ikeda) (Rickettsia tsutsugamushi) protein is Triosephosphate isomerase.